The primary structure comprises 100 residues: Defensin-like protein 316 (100 aa).

Positions 1–18 are cleaved as a signal peptide; it reads MASHIICYIFCIIKLSCA. Cystine bridges form between Cys-21–Cys-84, Cys-43–Cys-64, and Cys-53–Cys-76.

Belongs to the DEFL family.

The protein localises to the secreted. In Arabidopsis thaliana (Mouse-ear cress), this protein is Defensin-like protein 316.